A 204-amino-acid polypeptide reads, in one-letter code: Pyridoxal 5'-phosphate synthase subunit PdxT (204 aa).

L-glutamine is bound at residue 52–54 (GES). The Nucleophile role is filled by Cys-84. Residues Arg-116 and 143 to 144 (IR) each bind L-glutamine. Active-site charge relay system residues include His-184 and Glu-186.

It belongs to the glutaminase PdxT/SNO family. In the presence of PdxS, forms a dodecamer of heterodimers. Only shows activity in the heterodimer.

It carries out the reaction aldehydo-D-ribose 5-phosphate + D-glyceraldehyde 3-phosphate + L-glutamine = pyridoxal 5'-phosphate + L-glutamate + phosphate + 3 H2O + H(+). It catalyses the reaction L-glutamine + H2O = L-glutamate + NH4(+). Its pathway is cofactor biosynthesis; pyridoxal 5'-phosphate biosynthesis. In terms of biological role, catalyzes the hydrolysis of glutamine to glutamate and ammonia as part of the biosynthesis of pyridoxal 5'-phosphate. The resulting ammonia molecule is channeled to the active site of PdxS. This Pyrobaculum aerophilum (strain ATCC 51768 / DSM 7523 / JCM 9630 / CIP 104966 / NBRC 100827 / IM2) protein is Pyridoxal 5'-phosphate synthase subunit PdxT.